The primary structure comprises 490 residues: Betaine aldehyde dehydrogenase (490 aa).

K(+) is bound by residues S26, I27, and D93. G150–W152 contacts NAD(+). The active-site Charge relay system is K162. NAD(+) is bound by residues K176–E179 and G230–T233. Residue L246 participates in K(+) binding. E252 functions as the Proton acceptor in the catalytic mechanism. Residues G254, C286, and E387 each coordinate NAD(+). C286 serves as the catalytic Nucleophile. C286 carries the post-translational modification Cysteine sulfenic acid (-SOH). K457 and G460 together coordinate K(+). The active-site Charge relay system is the E464.

The protein belongs to the aldehyde dehydrogenase family. Dimer of dimers. K(+) serves as cofactor.

The enzyme catalyses betaine aldehyde + NAD(+) + H2O = glycine betaine + NADH + 2 H(+). The protein operates within amine and polyamine biosynthesis; betaine biosynthesis via choline pathway; betaine from betaine aldehyde: step 1/1. Its function is as follows. Involved in the biosynthesis of the osmoprotectant glycine betaine. Catalyzes the irreversible oxidation of betaine aldehyde to the corresponding acid. The protein is Betaine aldehyde dehydrogenase of Acinetobacter baumannii (strain ACICU).